We begin with the raw amino-acid sequence, 122 residues long: MARIAGVNIPTAKRVPIALTYITGIGPASAKAICEAVNIDATRRVNELSDAEVLAIREHIDATYTVEGDLRREVQMNIKRLMDLGCYRGLRHRRNLPVRGQRTHTNARTRKGPAKAIAGKKK.

The disordered stretch occupies residues 98–122 (VRGQRTHTNARTRKGPAKAIAGKKK).

This sequence belongs to the universal ribosomal protein uS13 family. In terms of assembly, part of the 30S ribosomal subunit. Forms a loose heterodimer with protein S19. Forms two bridges to the 50S subunit in the 70S ribosome.

In terms of biological role, located at the top of the head of the 30S subunit, it contacts several helices of the 16S rRNA. In the 70S ribosome it contacts the 23S rRNA (bridge B1a) and protein L5 of the 50S subunit (bridge B1b), connecting the 2 subunits; these bridges are implicated in subunit movement. Contacts the tRNAs in the A and P-sites. The protein is Small ribosomal subunit protein uS13 of Ruegeria sp. (strain TM1040) (Silicibacter sp.).